A 443-amino-acid polypeptide reads, in one-letter code: C4-dicarboxylate transport protein (443 aa).

The next 9 helical transmembrane spans lie at 17–37, 57–77, 92–112, 139–159, 161–181, 201–221, 234–254, 320–340, and 368–388; these read PFYS…ILLG, LVKM…IAGM, LYFL…ANVV, EQSI…GAFA, GDIL…AMVG, LVGI…AFTI, MLIG…LGAV, IYMT…LSWG, and AATL…ILGI.

This sequence belongs to the dicarboxylate/amino acid:cation symporter (DAACS) (TC 2.A.23) family.

It localises to the cell inner membrane. Functionally, responsible for the transport of dicarboxylates such as succinate, fumarate, and malate from the periplasm across the membrane. This Rhizobium etli (strain ATCC 51251 / DSM 11541 / JCM 21823 / NBRC 15573 / CFN 42) protein is C4-dicarboxylate transport protein.